Consider the following 220-residue polypeptide: NADH-quinone oxidoreductase subunit I (220 aa).

2 4Fe-4S ferredoxin-type domains span residues 71–102 (LQRL…IITH) and 112–141 (DSYT…MGNR). [4Fe-4S] cluster contacts are provided by Cys82, Cys85, Cys88, Cys92, Cys121, Cys124, Cys127, and Cys131. The disordered stretch occupies residues 189 to 220 (ATPLDYVQEPSKEESKKETPTSPEANKGDENV). Basic and acidic residues predominate over residues 198-207 (PSKEESKKET).

This sequence belongs to the complex I 23 kDa subunit family. NDH-1 is composed of 14 different subunits. Subunits NuoA, H, J, K, L, M, N constitute the membrane sector of the complex. [4Fe-4S] cluster is required as a cofactor.

The protein resides in the cell inner membrane. The catalysed reaction is a quinone + NADH + 5 H(+)(in) = a quinol + NAD(+) + 4 H(+)(out). NDH-1 shuttles electrons from NADH, via FMN and iron-sulfur (Fe-S) centers, to quinones in the respiratory chain. The immediate electron acceptor for the enzyme in this species is believed to be ubiquinone. Couples the redox reaction to proton translocation (for every two electrons transferred, four hydrogen ions are translocated across the cytoplasmic membrane), and thus conserves the redox energy in a proton gradient. This chain is NADH-quinone oxidoreductase subunit I, found in Helicobacter acinonychis (strain Sheeba).